The following is an 854-amino-acid chain: DNA mismatch repair protein MutS (854 aa).

An ATP-binding site is contributed by 615–622 (GPNMGGKS).

The protein belongs to the DNA mismatch repair MutS family.

Its function is as follows. This protein is involved in the repair of mismatches in DNA. It is possible that it carries out the mismatch recognition step. This protein has a weak ATPase activity. This Aliivibrio fischeri (strain MJ11) (Vibrio fischeri) protein is DNA mismatch repair protein MutS.